Consider the following 154-residue polypeptide: 3-hydroxyacyl-[acyl-carrier-protein] dehydratase FabZ (154 aa).

Histidine 59 is an active-site residue.

This sequence belongs to the thioester dehydratase family. FabZ subfamily.

The protein localises to the cytoplasm. The catalysed reaction is a (3R)-hydroxyacyl-[ACP] = a (2E)-enoyl-[ACP] + H2O. In terms of biological role, involved in unsaturated fatty acids biosynthesis. Catalyzes the dehydration of short chain beta-hydroxyacyl-ACPs and long chain saturated and unsaturated beta-hydroxyacyl-ACPs. In Bartonella bacilliformis (strain ATCC 35685 / KC583 / Herrer 020/F12,63), this protein is 3-hydroxyacyl-[acyl-carrier-protein] dehydratase FabZ.